The chain runs to 98 residues: NADH-ubiquinone oxidoreductase chain 4L (98 aa).

Transmembrane regions (helical) follow at residues 1-21 (MSMVYINIFLAFILSLMGMLV), 29-49 (SLLCLEGMMLSLFVMMSVTIL), and 61-81 (IVLLVFAACEAALGLSLLVMV).

Belongs to the complex I subunit 4L family. Core subunit of respiratory chain NADH dehydrogenase (Complex I) which is composed of 45 different subunits.

The protein resides in the mitochondrion inner membrane. It carries out the reaction a ubiquinone + NADH + 5 H(+)(in) = a ubiquinol + NAD(+) + 4 H(+)(out). Functionally, core subunit of the mitochondrial membrane respiratory chain NADH dehydrogenase (Complex I) which catalyzes electron transfer from NADH through the respiratory chain, using ubiquinone as an electron acceptor. Part of the enzyme membrane arm which is embedded in the lipid bilayer and involved in proton translocation. The protein is NADH-ubiquinone oxidoreductase chain 4L (MT-ND4L) of Canis latrans (Coyote).